Here is a 99-residue protein sequence, read N- to C-terminus: UPF0213 protein YazA (99 aa).

The GIY-YIG domain maps to 4 to 79; sequence NNHFFYVVKC…KKLTRKKKEL (76 aa).

This sequence belongs to the UPF0213 family.

The protein is UPF0213 protein YazA (yazA) of Bacillus subtilis (strain 168).